A 756-amino-acid chain; its full sequence is 5-methyltetrahydropteroyltriglutamate--homocysteine methyltransferase (756 aa).

5-methyltetrahydropteroyltri-L-glutamate is bound by residues 15-18 (REWK) and lysine 111. Positions 392-411 (GAATSHNLENKKRPQSFNER) are disordered. Positions 399–411 (LENKKRPQSFNER) are enriched in basic and acidic residues. Residues 429–431 (IGS) and glutamate 482 contribute to the L-homocysteine site. L-methionine is bound by residues 429–431 (IGS) and glutamate 482. Residues 513-514 (RC) and tryptophan 559 each bind 5-methyltetrahydropteroyltri-L-glutamate. Aspartate 597 contacts L-homocysteine. Aspartate 597 lines the L-methionine pocket. 5-methyltetrahydropteroyltri-L-glutamate is bound at residue glutamate 603. Zn(2+)-binding residues include histidine 639, cysteine 641, and glutamate 663. Catalysis depends on histidine 692, which acts as the Proton donor. Cysteine 724 provides a ligand contact to Zn(2+).

The protein belongs to the vitamin-B12 independent methionine synthase family. Zn(2+) serves as cofactor.

The catalysed reaction is 5-methyltetrahydropteroyltri-L-glutamate + L-homocysteine = tetrahydropteroyltri-L-glutamate + L-methionine. Its pathway is amino-acid biosynthesis; L-methionine biosynthesis via de novo pathway; L-methionine from L-homocysteine (MetE route): step 1/1. Functionally, catalyzes the transfer of a methyl group from 5-methyltetrahydrofolate to homocysteine resulting in methionine formation. The polypeptide is 5-methyltetrahydropteroyltriglutamate--homocysteine methyltransferase (Halalkalibacterium halodurans (strain ATCC BAA-125 / DSM 18197 / FERM 7344 / JCM 9153 / C-125) (Bacillus halodurans)).